The sequence spans 297 residues: Cbb3-type cytochrome c oxidase subunit CcoP (297 aa).

Topologically, residues 1–35 (MSKKPTTKKEVQTTGHQWDGIEELNTPLPRWWLWT) are cytoplasmic. A helical transmembrane segment spans residues 36–56 (FYATIIWGVAYSIAMPAWPIF). Topologically, residues 57–297 (SDKATPGLLG…SYVHSLGGGQ (241 aa)) are periplasmic. Cytochrome c domains lie at 108–199 (YTRN…LQIS) and 206–294 (VKAT…HSLG). Positions 121, 124, 125, 174, 219, 222, 223, and 264 each coordinate heme c.

This sequence belongs to the CcoP / FixP family. As to quaternary structure, component of the cbb3-type cytochrome c oxidase at least composed of CcoN, CcoO, CcoQ and CcoP. Interacts with CcoQ. The cofactor is heme c.

It is found in the cell inner membrane. The protein operates within energy metabolism; oxidative phosphorylation. Its function is as follows. C-type cytochrome. Part of the cbb3-type cytochrome c oxidase complex. CcoP subunit is required for transferring electrons from donor cytochrome c via its heme groups to CcoO subunit. From there, electrons are shuttled to the catalytic binuclear center of CcoN subunit where oxygen reduction takes place. The complex also functions as a proton pump. In Rhodobacter capsulatus (Rhodopseudomonas capsulata), this protein is Cbb3-type cytochrome c oxidase subunit CcoP.